We begin with the raw amino-acid sequence, 328 residues long: Apoptosis facilitator Bcl-2-like protein 14 (328 aa).

Ser44 carries the phosphoserine modification. The short motif at 213 to 227 (IVELLKFSGDQLGRE) is the BH3 element. The BH2 signature appears at 309 to 316 (WVQQNGGW).

It belongs to the Bcl-2 family. Phosphorylated by MELK, leading to inhibit its pro-apoptotic function.

The protein localises to the cytoplasm. Its function is as follows. Plays a role in apoptosis. The sequence is that of Apoptosis facilitator Bcl-2-like protein 14 (Bcl2l14) from Mus musculus (Mouse).